A 308-amino-acid polypeptide reads, in one-letter code: MTSDDTAQPSGARRIETRPDLTAAQKDAVLALLDEAAQVDGQQAVSEQGRLQLRGGPREGVRHLLLSVGEDLVGYAQLEDNDPVEAPAAELVVHPSHRGHGHGRALGSALLAESGKRLRVWAHGGHSAARHLAQVLGLTLFRELRQMRRSLTDFDPAEPVLPEGVTVRAFVPGEDDAAWLAANAEAFAHHPEQGSLTQRDLDDRKGEPWFDPAGFFLAFRGEELVGFHWTKAHAAEQLGEVYVVGVRPGAQGGGLGKALTTIGLRHLAAQGLPTAMLYVDADNKAAVTVYERLGFVTYETDLMYRSET.

A disordered region spans residues 1-20 (MTSDDTAQPSGARRIETRPD). 2 N-acetyltransferase domains span residues 15–152 (IETR…RSLT) and 165–308 (VTVR…RSET). Glu47 lines the 1D-myo-inositol 2-(L-cysteinylamino)-2-deoxy-alpha-D-glucopyranoside pocket. 91–93 (LVV) is an acetyl-CoA binding site. 1D-myo-inositol 2-(L-cysteinylamino)-2-deoxy-alpha-D-glucopyranoside contacts are provided by Glu192, Lys231, and Glu240. Residues 244-246 (VGV) and 251-257 (QGGGLGK) each bind acetyl-CoA. Tyr278 contributes to the 1D-myo-inositol 2-(L-cysteinylamino)-2-deoxy-alpha-D-glucopyranoside binding site.

This sequence belongs to the acetyltransferase family. MshD subfamily. As to quaternary structure, monomer.

It catalyses the reaction 1D-myo-inositol 2-(L-cysteinylamino)-2-deoxy-alpha-D-glucopyranoside + acetyl-CoA = mycothiol + CoA + H(+). In terms of biological role, catalyzes the transfer of acetyl from acetyl-CoA to desacetylmycothiol (Cys-GlcN-Ins) to form mycothiol. The polypeptide is Mycothiol acetyltransferase (Streptomyces scabiei (strain 87.22)).